We begin with the raw amino-acid sequence, 77 residues long: Large ribosomal subunit protein uL29 (77 aa).

The protein belongs to the universal ribosomal protein uL29 family.

The chain is Large ribosomal subunit protein uL29 from Corynebacterium urealyticum (strain ATCC 43042 / DSM 7109).